We begin with the raw amino-acid sequence, 170 residues long: Adenine phosphoribosyltransferase (170 aa).

The protein belongs to the purine/pyrimidine phosphoribosyltransferase family. In terms of assembly, homodimer.

The protein localises to the cytoplasm. It catalyses the reaction AMP + diphosphate = 5-phospho-alpha-D-ribose 1-diphosphate + adenine. The protein operates within purine metabolism; AMP biosynthesis via salvage pathway; AMP from adenine: step 1/1. Catalyzes a salvage reaction resulting in the formation of AMP, that is energically less costly than de novo synthesis. The chain is Adenine phosphoribosyltransferase from Halothermothrix orenii (strain H 168 / OCM 544 / DSM 9562).